The sequence spans 426 residues: UDP-N-acetylglucosamine 1-carboxyvinyltransferase (426 aa).

24 to 25 (KN) provides a ligand contact to phosphoenolpyruvate. Arg95 is a UDP-N-acetyl-alpha-D-glucosamine binding site. Cys119 acts as the Proton donor in catalysis. Cys119 carries the post-translational modification 2-(S-cysteinyl)pyruvic acid O-phosphothioketal. UDP-N-acetyl-alpha-D-glucosamine is bound by residues 124–128 (RPVDQ), Asp308, and Val330.

This sequence belongs to the EPSP synthase family. MurA subfamily.

It is found in the cytoplasm. It catalyses the reaction phosphoenolpyruvate + UDP-N-acetyl-alpha-D-glucosamine = UDP-N-acetyl-3-O-(1-carboxyvinyl)-alpha-D-glucosamine + phosphate. The protein operates within cell wall biogenesis; peptidoglycan biosynthesis. Cell wall formation. Adds enolpyruvyl to UDP-N-acetylglucosamine. This chain is UDP-N-acetylglucosamine 1-carboxyvinyltransferase, found in Deinococcus radiodurans (strain ATCC 13939 / DSM 20539 / JCM 16871 / CCUG 27074 / LMG 4051 / NBRC 15346 / NCIMB 9279 / VKM B-1422 / R1).